Consider the following 743-residue polypeptide: MMSQATPSATPVRNADGQKKGKKLPLIVDVAIGNNGKQLYQVHESSKMVRKEMPRSTNFALNDDISDEGFFISQINEQRTPIRKTLGTLSPSSLNQKRIRHDVYDQGDDNSNDDNCQNDVYEQQQQQPQQQQQQQQQLHQPNMYENGNVGVISNDPVSSVGHYDNNPVSHVPTGAYSRVQDTDIWSDDVEEAFEEVLRLIPKSGLNKIKIAGRSCGRNELISDYIFAKTGKFRTRKQVSSHIQVIKNLGQKLDIIQLINDGPIFNSHEEQLESTKKFEDVFSKINLNKSLGFSDSMKRKSDSMPMHLPATKRIRRKHSGNPLNKIKFSNFFMSVNDQYGMNPIVLTIQQNGNDVKSLKLKDNANISSRFPGLSDFKSCPHIPIIHNMVKILLPQLPESYSIDDGFSSSYALKYEEPENASPTHTSIISSSRTYSLFTCVYSYGKEIVKFDEDGIQLNQDREFIPGFWKFFFSTFGDQSEGGLSAAFKGVTIKQILYESSPDSVKKEQDASKVNKSKVKLVLLWEFAKVSECKDALTTTTKLVLPPRASASSSKTTEEVFEYSEPALNSIGGTPTDTTSPNMDLNNQNLSAAATSIPGIRDTIHSASMPDINELPSSAKPQVRLQKTFQSMQHLQPHQMWQQQQQQQPSQGAYTSSVASQSLNTSLSSPYAQYGMPLPQQTIGTFVPPTSQTFGVSYTHNSQHPSANMDLMMLSSMNTGYGNITNNQDYQFGNIGYTEGFTSEF.

A compositionally biased stretch (polar residues) spans 1 to 11 (MMSQATPSATP). Disordered regions lie at residues 1 to 20 (MMSQATPSATPVRNADGQKK) and 104 to 165 (YDQG…HYDN). The segment covering 113 to 137 (DDNCQNDVYEQQQQQPQQQQQQQQQ) has biased composition (low complexity). The segment at residues 178–252 (RVQDTDIWSD…QVIKNLGQKL (75 aa)) is a DNA-binding region (TEA). Residues 629 to 657 (SMQHLQPHQMWQQQQQQQPSQGAYTSSVA) form a disordered region. The segment covering 630–649 (MQHLQPHQMWQQQQQQQPSQ) has biased composition (low complexity).

Belongs to the TEC1 family.

The protein localises to the nucleus. Its function is as follows. Transcription factor which regulates genes involved in hyphal development, cell adhesion, biofilm development, and virulence. Plays a role in the formation of 'finger' morphology, a unique multicellular morphology of C.albicans induced by carbon dioxide. Regulates gene expression during intestinal colonization. Required for the expression of the secreted aspartyl proteinases SAP4, SAP5, and SAP6; but also of BCR1, PGA4, and CDC24. Moreover, a positive feedback loop between CDC24 and TEC1 contributes to an increase in active CDC42 at the tip of the germ tube which is important for hyphae formation. Also regulates the pheromone response of the white cell phenotype. The polypeptide is Transcription activator TEC1 (TEC1) (Candida albicans (strain SC5314 / ATCC MYA-2876) (Yeast)).